An 818-amino-acid chain; its full sequence is Glycerol-3-phosphate acyltransferase (818 aa).

Residues 305 to 310 (CHRSHM) carry the HXXXXD motif motif.

This sequence belongs to the GPAT/DAPAT family.

Its subcellular location is the cell inner membrane. The enzyme catalyses sn-glycerol 3-phosphate + an acyl-CoA = a 1-acyl-sn-glycero-3-phosphate + CoA. The protein operates within phospholipid metabolism; CDP-diacylglycerol biosynthesis; CDP-diacylglycerol from sn-glycerol 3-phosphate: step 1/3. The polypeptide is Glycerol-3-phosphate acyltransferase (Edwardsiella ictaluri (strain 93-146)).